The chain runs to 212 residues: Vesicle transport protein SFT2C (212 aa).

Over 1 to 78 (MADLHRQLQD…TRGQRLVAGG (78 aa)) the chain is Cytoplasmic. A helical transmembrane segment spans residues 79–99 (LCLLLAALCFGLAALYAPVLL). Topologically, residues 100 to 104 (LRARK) are lumenal. Residues 105-125 (FALLWSLGSVLAWASAALLRG) form a helical membrane-spanning segment. Over 126-142 (GPACGRLLRGEETPSRS) the chain is Cytoplasmic. The helical transmembrane segment at 143-165 (TLGYAAALGATLYAALVLRSTVL) threads the bilayer. The Lumenal segment spans residues 166-174 (TALGACAQV). A helical membrane pass occupies residues 175 to 197 (AALLYALIGLLPWGGVTALRLAL). The Cytoplasmic portion of the chain corresponds to 198-212 (GRLNRGTGLANALPV).

It belongs to the SFT2 family.

The protein resides in the membrane. Functionally, may be involved in fusion of retrograde transport vesicles derived from an endocytic compartment with the Golgi complex. The polypeptide is Vesicle transport protein SFT2C (Mus musculus (Mouse)).